The chain runs to 223 residues: Adenylate kinase 4, mitochondrial (223 aa).

Glycine 15–threonine 20 lines the a ribonucleoside 5'-triphosphate pocket. The segment at serine 35–valine 64 is NMP. Serine 36 and arginine 41 together coordinate AMP. Position 60 is an N6-succinyllysine (lysine 60). AMP-binding positions include leucine 62 to valine 64, glycine 89 to arginine 92, and glutamine 96. Residues arginine 125–aspartate 162 are LID. Residues arginine 126 and valine 135–tyrosine 136 each bind a ribonucleoside 5'-triphosphate. Arginine 170 provides a ligand contact to AMP. At lysine 175 the chain carries N6-acetyllysine. N6-acetyllysine; alternate occurs at positions 179 and 186. Lysine 179 and lysine 186 each carry N6-succinyllysine; alternate. A ribonucleoside 5'-triphosphate is bound at residue threonine 199.

Belongs to the adenylate kinase family. AK3 subfamily. Monomer. Interacts with SLC25A5/ANT2.

It localises to the mitochondrion matrix. It carries out the reaction a ribonucleoside 5'-phosphate + ATP = a ribonucleoside 5'-diphosphate + ADP. The catalysed reaction is AMP + ATP = 2 ADP. The enzyme catalyses GTP + AMP = GDP + ADP. It catalyses the reaction CMP + ATP = CDP + ADP. It carries out the reaction GTP + CMP = CDP + GDP. The catalysed reaction is dAMP + ATP = dADP + ADP. The enzyme catalyses dCMP + ATP = dCDP + ADP. It catalyses the reaction a 2'-deoxyribonucleoside 5'-diphosphate + ATP = a 2'-deoxyribonucleoside 5'-triphosphate + ADP. It carries out the reaction a ribonucleoside 5'-diphosphate + ATP = a ribonucleoside 5'-triphosphate + ADP. The catalysed reaction is GDP + ATP = GTP + ADP. The enzyme catalyses CDP + GTP = CTP + GDP. It catalyses the reaction CDP + ATP = CTP + ADP. It carries out the reaction UDP + ATP = UTP + ADP. The catalysed reaction is GTP + UDP = UTP + GDP. The enzyme catalyses dADP + GTP = dATP + GDP. It catalyses the reaction dCDP + GTP = dCTP + GDP. It carries out the reaction dCDP + ATP = dCTP + ADP. The catalysed reaction is dGDP + ATP = dGTP + ADP. The enzyme catalyses dTDP + GTP = dTTP + GDP. It catalyses the reaction dTDP + ATP = dTTP + ADP. Its function is as follows. Broad-specificity mitochondrial nucleoside phosphate kinase involved in cellular nucleotide homeostasis by catalyzing nucleoside-phosphate interconversions. Similar to other adenylate kinases, preferentially catalyzes the phosphorylation of the nucleoside monophosphate AMP with ATP as phosphate donor to produce ADP. Phosphorylates only AMP when using GTP as phosphate donor. In vitro, can also catalyze the phosphorylation of CMP, dAMP and dCMP and use GTP as an alternate phosphate donor. Moreover, exhibits a diphosphate kinase activity, producing ATP, CTP, GTP, UTP, TTP, dATP, dCTP and dGTP from the corresponding diphosphate substrates with either ATP or GTP as phosphate donors. Plays a role in controlling cellular ATP levels by regulating phosphorylation and activation of the energy sensor protein kinase AMPK. Plays a protective role in the cellular response to oxidative stress. This Pongo abelii (Sumatran orangutan) protein is Adenylate kinase 4, mitochondrial.